The following is a 114-amino-acid chain: DNA-directed RNA polymerase subunit Rpo4 (114 aa).

It belongs to the eukaryotic RPB4 RNA polymerase subunit family. Part of the 13-subunit RNA polymerase complex. Forms a stalk with Rpo7 that extends from the main structure. In purified enzyme appears as 5 forms, each differing by about 200 Da of a covalently bound, negatively charged residue. Not glycosylated.

It is found in the cytoplasm. The enzyme catalyses RNA(n) + a ribonucleoside 5'-triphosphate = RNA(n+1) + diphosphate. Functionally, DNA-dependent RNA polymerase catalyzes the transcription of DNA into RNA using the four ribonucleoside triphosphates as substrates. This subunit is less well bound than the others. Probably not involved in transcription initiation. This is DNA-directed RNA polymerase subunit Rpo4 from Sulfolobus acidocaldarius (strain ATCC 33909 / DSM 639 / JCM 8929 / NBRC 15157 / NCIMB 11770).